A 353-amino-acid polypeptide reads, in one-letter code: UPF0283 membrane protein YcjF (353 aa).

The disordered stretch occupies residues 16–35 (KEESTSAFKAQQTFSEAESR). Positions 20–31 (TSAFKAQQTFSE) are enriched in polar residues. 3 helical membrane passes run 70 to 90 (MVMGGLALFGASVVGQGVQWT), 100 to 120 (VALGGCAAGALIIGAGVGSVV), and 213 to 233 (ESTLMIAVSPLALVDMAFIAW).

This sequence belongs to the UPF0283 family.

It is found in the cell inner membrane. The protein is UPF0283 membrane protein YcjF of Salmonella heidelberg (strain SL476).